A 228-amino-acid polypeptide reads, in one-letter code: Probable C4-dicarboxylate response regulator DctR (228 aa).

Positions 7–123 (TVLLIEDDPM…RMKQALEQYR (117 aa)) constitute a Response regulatory domain. Asp58 carries the 4-aspartylphosphate modification. The H-T-H motif DNA-binding region spans 180–199 (AEEVADGVGIARVTARRYLE).

Post-translationally, phosphorylated by DctS.

The protein resides in the cytoplasm. In terms of biological role, member of the two-component regulatory system DctS/DctR. Essential for expression of DctP. This Priestia megaterium (Bacillus megaterium) protein is Probable C4-dicarboxylate response regulator DctR (dctR).